A 201-amino-acid polypeptide reads, in one-letter code: Lipopolysaccharide core heptose(II)-phosphate phosphatase (201 aa).

The signal sequence occupies residues 1–35 (MLAFILRFIKNKSYFALLAGAWVIIAGLTSQHAWS).

It belongs to the phosphoglycerate mutase family. Ais subfamily.

Its subcellular location is the periplasm. It functions in the pathway bacterial outer membrane biogenesis; lipopolysaccharide metabolism. Its function is as follows. Catalyzes the dephosphorylation of heptose(II) of the outer membrane lipopolysaccharide core. The sequence is that of Lipopolysaccharide core heptose(II)-phosphate phosphatase from Salmonella arizonae (strain ATCC BAA-731 / CDC346-86 / RSK2980).